The chain runs to 375 residues: Chaperone protein DnaJ (375 aa).

In terms of domain architecture, J spans 5-70 (DYYEVLGVAR…NKRRAYDAHG (66 aa)). A CR-type zinc finger spans residues 131 to 208 (GIERRIEIPT…CHGAGRVEED (78 aa)). Residues Cys-144, Cys-147, Cys-160, Cys-163, Cys-182, Cys-185, Cys-196, and Cys-199 each coordinate Zn(2+). CXXCXGXG motif repeat units lie at residues 144–151 (CAPCHGSG), 160–167 (CGTCHGRG), 182–189 (CPHCDGRG), and 196–203 (CKTCHGAG).

The protein belongs to the DnaJ family. Homodimer. Zn(2+) serves as cofactor.

It localises to the cytoplasm. Its function is as follows. Participates actively in the response to hyperosmotic and heat shock by preventing the aggregation of stress-denatured proteins and by disaggregating proteins, also in an autonomous, DnaK-independent fashion. Unfolded proteins bind initially to DnaJ; upon interaction with the DnaJ-bound protein, DnaK hydrolyzes its bound ATP, resulting in the formation of a stable complex. GrpE releases ADP from DnaK; ATP binding to DnaK triggers the release of the substrate protein, thus completing the reaction cycle. Several rounds of ATP-dependent interactions between DnaJ, DnaK and GrpE are required for fully efficient folding. Also involved, together with DnaK and GrpE, in the DNA replication of plasmids through activation of initiation proteins. This Xanthomonas axonopodis pv. citri (strain 306) protein is Chaperone protein DnaJ.